The primary structure comprises 1051 residues: Putative helicase/primase complex protein (1051 aa).

Belongs to the asfivirus F1055L family.

In terms of biological role, may be involved in DNA replication. This chain is Putative helicase/primase complex protein, found in Ornithodoros (relapsing fever ticks).